The following is a 336-amino-acid chain: Fructose-1,6-bisphosphatase class 1 (336 aa).

Glu90, Asp112, Leu114, and Asp115 together coordinate Mg(2+). Substrate contacts are provided by residues 115 to 118, Asn211, and Lys277; that span reads DGSS. Glu283 contributes to the Mg(2+) binding site.

The protein belongs to the FBPase class 1 family. In terms of assembly, homotetramer. Mg(2+) is required as a cofactor.

The protein localises to the cytoplasm. It catalyses the reaction beta-D-fructose 1,6-bisphosphate + H2O = beta-D-fructose 6-phosphate + phosphate. The protein operates within carbohydrate biosynthesis; gluconeogenesis. This is Fructose-1,6-bisphosphatase class 1 from Pseudomonas entomophila (strain L48).